Reading from the N-terminus, the 159-residue chain is Urease accessory protein UreE (159 aa).

Belongs to the UreE family.

It is found in the cytoplasm. Functionally, involved in urease metallocenter assembly. Binds nickel. Probably functions as a nickel donor during metallocenter assembly. This Acinetobacter baylyi (strain ATCC 33305 / BD413 / ADP1) protein is Urease accessory protein UreE.